Consider the following 219-residue polypeptide: UPF0502 protein Ppro_2903 (219 aa).

Belongs to the UPF0502 family.

In Pelobacter propionicus (strain DSM 2379 / NBRC 103807 / OttBd1), this protein is UPF0502 protein Ppro_2903.